A 217-amino-acid chain; its full sequence is ATP-dependent Clp protease proteolytic subunit (217 aa).

S121 serves as the catalytic Nucleophile. H146 is a catalytic residue.

Belongs to the peptidase S14 family. Fourteen ClpP subunits assemble into 2 heptameric rings which stack back to back to give a disk-like structure with a central cavity, resembling the structure of eukaryotic proteasomes.

The protein localises to the cytoplasm. It carries out the reaction Hydrolysis of proteins to small peptides in the presence of ATP and magnesium. alpha-casein is the usual test substrate. In the absence of ATP, only oligopeptides shorter than five residues are hydrolyzed (such as succinyl-Leu-Tyr-|-NHMec, and Leu-Tyr-Leu-|-Tyr-Trp, in which cleavage of the -Tyr-|-Leu- and -Tyr-|-Trp bonds also occurs).. Cleaves peptides in various proteins in a process that requires ATP hydrolysis. Has a chymotrypsin-like activity. Plays a major role in the degradation of misfolded proteins. The protein is ATP-dependent Clp protease proteolytic subunit of Burkholderia vietnamiensis (strain G4 / LMG 22486) (Burkholderia cepacia (strain R1808)).